Reading from the N-terminus, the 199-residue chain is Recombination protein RecR (199 aa).

The C4-type zinc-finger motif lies at 56 to 71 (CSICFNWSAEDPCEIC). The Toprim domain occupies 79-174 (SLWCVVADVK…TLRMTRLAFG (96 aa)).

This sequence belongs to the RecR family.

May play a role in DNA repair. It seems to be involved in an RecBC-independent recombinational process of DNA repair. It may act with RecF and RecO. The protein is Recombination protein RecR of Synechococcus sp. (strain JA-2-3B'a(2-13)) (Cyanobacteria bacterium Yellowstone B-Prime).